A 692-amino-acid polypeptide reads, in one-letter code: A-kinase anchor protein 8 (692 aa).

Residues 1–195 (MDQGYGGYGA…FMRGRGQGRF (195 aa)) form an interaction with MCM2 region. An interaction with DPY30 region spans residues 1–210 (MDQGYGGYGA…PGTFMRSDPF (210 aa)). An Asymmetric dimethylarginine; alternate modification is found at Arg-109. An Omega-N-methylarginine; alternate modification is found at Arg-109. Residues 109-201 (RGGSGGGGEG…QGRFQDRSNP (93 aa)) are interaction with DDX5. Phosphoserine is present on Ser-112. Disordered regions lie at residues 168–203 (GQYSECRDPARERGSLDGFMRGRGQGRFQDRSNPGT), 231–254 (GGRGLGGPSPSRPPPSLFSQSMAP), and 269–382 (STMP…RTRD). A compositionally biased stretch (basic and acidic residues) spans 172 to 182 (ECRDPARERGS). Ser-199 is subject to Phosphoserine. 2 positions are modified to omega-N-methylarginine: Arg-233 and Arg-277. Composition is skewed to basic and acidic residues over residues 281–297 (RMRDRDRPKRRGFDRFG) and 314–323 (PDTKLARVDS). The short motif at 289 to 306 (KRRGFDRFGPDGTGRKRK) is the Bipartite nuclear localization signal element. Lys-317 is covalently cross-linked (Glycyl lysine isopeptide (Lys-Gly) (interchain with G-Cter in SUMO2)). Residues Ser-323, Ser-328, and Ser-339 each carry the phosphoserine modification. The span at 324–334 (EGDFSENDDAA) shows a compositional bias: acidic residues. Positions 387-450 (RIQFACSVCK…NKKIEKRRQE (64 aa)) are involved in chromatin-binding. C2H2 AKAP95-type zinc fingers lie at residues 392–414 (CSVCKFRSFDDEEIQKHLQSKFH) and 481–504 (CLACDMLIPAQPQLLQRHLHSVDH). The interval 525–569 (SVLNNRHIVKMLEKYLKGEDPFTSETVDPEMEGDDNLGGEDKKET) is involved in condensin complex recruitment. Positions 545-571 (PFTSETVDPEMEGDDNLGGEDKKETPE) are disordered. Residues 551–562 (VDPEMEGDDNLG) show a composition bias toward acidic residues. Lys-567 is covalently cross-linked (Glycyl lysine isopeptide (Lys-Gly) (interchain with G-Cter in SUMO2)). Residues 572-589 (EVAADVLAEVITAAVRAV) form an RII-binding region. Positions 576–593 (DVLAEVITAAVRAVDGEG) are required for interaction with MYCBP. The interval 592–692 (EGAPAPESSG…AESKDAVPTE (101 aa)) is disordered. Positions 634–646 (AHEKGVPKARSEA) are enriched in basic and acidic residues. A Phosphoserine modification is found at Ser-662. Positions 663–675 (AQTRVAPAPAAAD) are enriched in low complexity. A compositionally biased stretch (basic and acidic residues) spans 683-692 (AESKDAVPTE). Position 685 is a phosphoserine (Ser-685).

The protein belongs to the AKAP95 family. In terms of assembly, binds to the PKA RII-alpha regulatory subunit PRKAR2A (phosphorylated at 'Thr-54') during mitosis. Interacts (via C-terminus) with FIGN. Interacts with NCAPD2, CCND1, MCM2, RPS6KA1, PDE4A. Interacts with CCND3, CCNE1, DDX5, CASP3. Interacts with NFKB1; detetcted in the cytoplasm. Interacts with MYCBP; MYCBP is translocated to the nucleus and the interaction prevents the association of the PKA catalytic subunit leading to suppression of PKA activity. Interacts with DPY30; mediating AKAP8 association with at least the MLL4/WBP7 HMT complex. Interacts with HDAC3; increased during mitosis. Interacts with GJA1; in the nucleus and in the nuclear membrane; the nuclear association increases with progress of cell cycle G1, S and G2 phase and decreases in M phase. Phosphorylated on tyrosine residues probably by SRC subfamily protein kinases; multiple phosphorylation is leading to dissociation from nuclear structures implicated in chromatin structural changes. As to expression, highly expressed in heart, liver, skeletal muscle, kidney and pancreas. Expressed in mature dendritic cells.

It localises to the nucleus. Its subcellular location is the nucleus matrix. It is found in the nucleolus. The protein localises to the cytoplasm. Anchoring protein that mediates the subcellular compartmentation of cAMP-dependent protein kinase (PKA type II). Acts as an anchor for a PKA-signaling complex onto mitotic chromosomes, which is required for maintenance of chromosomes in a condensed form throughout mitosis. Recruits condensin complex subunit NCAPD2 to chromosomes required for chromatin condensation; the function appears to be independent from PKA-anchoring. May help to deliver cyclin D/E to CDK4 to facilitate cell cycle progression. Required for cell cycle G2/M transition and histone deacetylation during mitosis. In mitotic cells recruits HDAC3 to the vicinity of chromatin leading to deacetylation and subsequent phosphorylation at 'Ser-10' of histone H3; in this function may act redundantly with AKAP8L. Involved in nuclear retention of RPS6KA1 upon ERK activation thus inducing cell proliferation. May be involved in regulation of DNA replication by acting as scaffold for MCM2. Enhances HMT activity of the KMT2 family MLL4/WBP7 complex and is involved in transcriptional regulation. In a teratocarcinoma cell line is involved in retinoic acid-mediated induction of developmental genes implicating H3 'Lys-4' methylation. May be involved in recruitment of active CASP3 to the nucleus in apoptotic cells. May act as a carrier protein of GJA1 for its transport to the nucleus. May play a repressive role in the regulation of rDNA transcription. Preferentially binds GC-rich DNA in vitro. In cells, associates with ribosomal RNA (rRNA) chromatin, preferentially with rRNA promoter and transcribed regions. Involved in modulation of Toll-like receptor signaling. Required for the cAMP-dependent suppression of TNF-alpha in early stages of LPS-induced macrophage activation; the function probably implicates targeting of PKA to NFKB1. This chain is A-kinase anchor protein 8 (AKAP8), found in Homo sapiens (Human).